A 151-amino-acid chain; its full sequence is Ribosome maturation factor RimP (151 aa).

The protein belongs to the RimP family.

The protein localises to the cytoplasm. Functionally, required for maturation of 30S ribosomal subunits. This is Ribosome maturation factor RimP from Saccharophagus degradans (strain 2-40 / ATCC 43961 / DSM 17024).